Here is a 554-residue protein sequence, read N- to C-terminus: (E)-beta-caryophyllene synthase (554 aa).

Residues D313 and D317 each coordinate Mn(2+). The DDXXD motif motif lies at 313 to 317 (DDTYD). Homodimerization regions lie at residues 319–325 (YGTLDEL) and 391–427 (EAQWFFSKYKPTMQEYMKVALLSSGYMMMTINSLAVI). Residues D457 and E465 each coordinate Mn(2+).

This sequence belongs to the terpene synthase family. In terms of assembly, homodimer. Mn(2+) is required as a cofactor. The cofactor is Mg(2+). As to expression, expressed in peltate glandular trichomes. Present at low levels in flowers, leaves and stems.

The enzyme catalyses (2E,6E)-farnesyl diphosphate = (-)-(E)-beta-caryophyllene + diphosphate. It catalyses the reaction (2E,6E)-farnesyl diphosphate = alpha-humulene + diphosphate. Its pathway is secondary metabolite biosynthesis; terpenoid biosynthesis. Involved in the biosynthesis of phenolic sesquiterpenes natural products. Sesquiterpene synthase converting (2E,6E)-farnesyl diphosphate (FPP) to (E)-beta-caryophyllene and alpha-humulene. The sequence is that of (E)-beta-caryophyllene synthase from Origanum vulgare (Wild marjoram).